Reading from the N-terminus, the 515-residue chain is E3 ubiquitin-protein ligase RNF38 (515 aa).

Residues Asp57–Phe71 carry the Bipartite nuclear localization signal 1 motif. The tract at residues Tyr73–Asp141 is disordered. Residues Met89–His104 are compositionally biased toward polar residues. The short motif at Arg115 to Arg131 is the Bipartite nuclear localization signal 2 element. Basic residues predominate over residues Arg115–Arg134. The segment at Cys463 to Arg504 adopts an RING-type zinc-finger fold.

Widely expressed with highest levels in testis.

The protein localises to the nucleus. The enzyme catalyses S-ubiquitinyl-[E2 ubiquitin-conjugating enzyme]-L-cysteine + [acceptor protein]-L-lysine = [E2 ubiquitin-conjugating enzyme]-L-cysteine + N(6)-ubiquitinyl-[acceptor protein]-L-lysine.. It participates in protein modification; protein ubiquitination. Functionally, acts as an E3 ubiquitin-protein ligase able to ubiquitinate p53/TP53 which promotes its relocalization to discrete foci associated with PML nuclear bodies. Exhibits preference for UBE2D2 as a E2 enzyme. The polypeptide is E3 ubiquitin-protein ligase RNF38 (Homo sapiens (Human)).